Consider the following 558-residue polypeptide: Dihydroxy-acid dehydratase (558 aa).

Asp-81 lines the Mg(2+) pocket. Cys-122 contributes to the [2Fe-2S] cluster binding site. Positions 123 and 124 each coordinate Mg(2+). The residue at position 124 (Lys-124) is an N6-carboxylysine. Cys-195 lines the [2Fe-2S] cluster pocket. Mg(2+) is bound at residue Glu-447. Catalysis depends on Ser-473, which acts as the Proton acceptor.

Belongs to the IlvD/Edd family. In terms of assembly, homodimer. [2Fe-2S] cluster serves as cofactor. Requires Mg(2+) as cofactor.

The catalysed reaction is (2R)-2,3-dihydroxy-3-methylbutanoate = 3-methyl-2-oxobutanoate + H2O. The enzyme catalyses (2R,3R)-2,3-dihydroxy-3-methylpentanoate = (S)-3-methyl-2-oxopentanoate + H2O. It functions in the pathway amino-acid biosynthesis; L-isoleucine biosynthesis; L-isoleucine from 2-oxobutanoate: step 3/4. Its pathway is amino-acid biosynthesis; L-valine biosynthesis; L-valine from pyruvate: step 3/4. Functionally, functions in the biosynthesis of branched-chain amino acids. Catalyzes the dehydration of (2R,3R)-2,3-dihydroxy-3-methylpentanoate (2,3-dihydroxy-3-methylvalerate) into 2-oxo-3-methylpentanoate (2-oxo-3-methylvalerate) and of (2R)-2,3-dihydroxy-3-methylbutanoate (2,3-dihydroxyisovalerate) into 2-oxo-3-methylbutanoate (2-oxoisovalerate), the penultimate precursor to L-isoleucine and L-valine, respectively. The chain is Dihydroxy-acid dehydratase from Bacillus pumilus (strain SAFR-032).